The chain runs to 1293 residues: Late blight resistance protein R1-A (1293 aa).

2 coiled-coil regions span residues 423–446 (RYSD…ESLQ) and 538–560 (PRMN…KLLN). The region spanning 539–826 (RMNEEIVGFE…SEAFIKSSEG (288 aa)) is the NB-ARC domain. 572 to 579 (GMPGLGKT) contacts ATP. 9 LRR repeats span residues 876–899 (AEEN…VYSH), 956–981 (FKFL…VYLK), 1027–1049 (MVKL…LLEN), 1056–1079 (LETL…KTPN), 1102–1125 (PIRL…ISAP), 1149–1172 (LKHL…KVSN), 1175–1197 (FPQL…ADDA), 1198–1222 (FPNL…FMDI), and 1235–1259 (ESVV…NFKL).

This sequence belongs to the disease resistance NB-LRR family.

It localises to the cytoplasm. Its subcellular location is the membrane. Its function is as follows. Confers resistance to late blight (Phytophthora infestans) races carrying the avirulence gene Avr1. Resistance proteins guard the plant against pathogens that contain an appropriate avirulence protein via an indirect interaction with this avirulence protein. That triggers a defense system including the hypersensitive response, which restricts the pathogen growth. This is Late blight resistance protein R1-A (R1A) from Solanum demissum (Wild potato).